The primary structure comprises 746 residues: Mediator of RNA polymerase II transcription subunit 25 (746 aa).

The tract at residues 1–226 (MVPGSEGPAR…PRHMVLVRGL (226 aa)) is interaction with the Mediator complex. 2 disordered regions span residues 233–273 (GSAP…QQYQ) and 298–390 (GLGP…PALG). Pro residues predominate over residues 238–251 (PLQPKQPVPLPPAA). A compositionally biased stretch (low complexity) spans 252–262 (PAGATLSTAPQ). Positions 329-342 (PPGPPGAPKPPPAS) are enriched in pro residues. Residues 343–354 (QPSLVSTVAPGP) are compositionally biased toward low complexity. The tract at residues 389–543 (LGGQQSVSNK…VNGIRQVITN (155 aa)) is interaction with VP16. The interaction with CREBBP stretch occupies residues 395-545 (VSNKLLAWSG…GIRQVITNHK (151 aa)). Residues 548–746 (QQQKLEQQRG…MEDDILMDLI (199 aa)) form a disordered region. 2 interaction with RARA regions span residues 563-652 (APPG…LLNP) and 639-706 (PGAN…WPAQ). Residues 599 to 610 (AAAGQPQPQGAA) show a composition bias toward low complexity. Pro residues predominate over residues 611-633 (PAPPGAPQGPPGAAPGPPPPGPL). An LXXLL motif motif is present at residues 645–649 (LRSLL). Pro residues-rich tracts occupy residues 651-663 (NPPP…PPPQ), 672-682 (PGAPALLPPPH), and 690-701 (LGPPLLHPPPAQ). At arginine 724 the chain carries Asymmetric dimethylarginine. Residues 737–746 (MEDDILMDLI) show a composition bias toward acidic residues.

Belongs to the Mediator complex subunit 25 family. As to quaternary structure, component of the Mediator complex, which is composed of MED1, MED4, MED6, MED7, MED8, MED9, MED10, MED11, MED12, MED13, MED13L, MED14, MED15, MED16, MED17, MED18, MED19, MED20, MED21, MED22, MED23, MED24, MED25, MED26, MED27, MED29, MED30, MED31, CCNC, CDK8 and CDC2L6/CDK11. The MED12, MED13, CCNC and CDK8 subunits form a distinct module termed the CDK8 module. Mediator containing the CDK8 module is less active than Mediator lacking this module in supporting transcriptional activation. Individual preparations of the Mediator complex lacking one or more distinct subunits have been variously termed ARC, CRSP, DRIP, PC2, SMCC and TRAP. Interacts with CREBBP. Interacts with ESR1, GR, RARA, RXRA and THRB in a ligand-dependent fashion. Binds the Herpes simplex virus activator VP16.

The protein localises to the nucleus. Component of the Mediator complex, a coactivator involved in the regulated transcription of nearly all RNA polymerase II-dependent genes. Mediator functions as a bridge to convey information from gene-specific regulatory proteins to the basal RNA polymerase II transcription machinery. Mediator is recruited to promoters by direct interactions with regulatory proteins and serves as a scaffold for the assembly of a functional preinitiation complex with RNA polymerase II and the general transcription factors. Required for RARA/RXRA-mediated transcription. This is Mediator of RNA polymerase II transcription subunit 25 (MED25) from Bos taurus (Bovine).